Reading from the N-terminus, the 44-residue chain is Cytochrome b559 subunit beta (44 aa).

Residues 19 to 35 (WIAVHTLAVPSVFFLGA) traverse the membrane as a helical segment. His-23 provides a ligand contact to heme.

Belongs to the PsbE/PsbF family. As to quaternary structure, heterodimer of an alpha subunit and a beta subunit. PSII is composed of 1 copy each of membrane proteins PsbA, PsbB, PsbC, PsbD, PsbE, PsbF, PsbH, PsbI, PsbJ, PsbK, PsbL, PsbM, PsbT, PsbX, PsbY, PsbZ, Psb30/Ycf12, peripheral proteins PsbO, CyanoQ (PsbQ), PsbU, PsbV and a large number of cofactors. It forms dimeric complexes. The cofactor is heme b.

The protein localises to the cellular thylakoid membrane. Its function is as follows. This b-type cytochrome is tightly associated with the reaction center of photosystem II (PSII). PSII is a light-driven water:plastoquinone oxidoreductase that uses light energy to abstract electrons from H(2)O, generating O(2) and a proton gradient subsequently used for ATP formation. It consists of a core antenna complex that captures photons, and an electron transfer chain that converts photonic excitation into a charge separation. This is Cytochrome b559 subunit beta from Cyanothece sp. (strain PCC 7425 / ATCC 29141).